The chain runs to 152 residues: UPF0756 membrane protein CA_C0092 (152 aa).

4 helical membrane-spanning segments follow: residues 5–25 (IILVVILGISIVGKATSVAIS), 50–70 (MFWGLVLLTAAILIPIAQGNV), 82–102 (FVGITALVLSFLTTYLSGVGL), and 117–137 (LILGSVAAAAFLGGVPVGPLI).

The protein belongs to the UPF0756 family.

The protein localises to the cell membrane. This is UPF0756 membrane protein CA_C0092 from Clostridium acetobutylicum (strain ATCC 824 / DSM 792 / JCM 1419 / IAM 19013 / LMG 5710 / NBRC 13948 / NRRL B-527 / VKM B-1787 / 2291 / W).